The chain runs to 326 residues: Pantothenate kinase (326 aa).

Residue Gly104–Ser111 coordinates ATP.

Belongs to the prokaryotic pantothenate kinase family.

The protein resides in the cytoplasm. The catalysed reaction is (R)-pantothenate + ATP = (R)-4'-phosphopantothenate + ADP + H(+). It functions in the pathway cofactor biosynthesis; coenzyme A biosynthesis; CoA from (R)-pantothenate: step 1/5. This is Pantothenate kinase from Parvibaculum lavamentivorans (strain DS-1 / DSM 13023 / NCIMB 13966).